The primary structure comprises 160 residues: Cytochrome b6-f complex subunit 4 (160 aa).

3 helical membrane-spanning segments follow: residues 36–56 (LLYIFPVVILGTIACNVGLAI), 95–115 (LLGVLLMVSVPSGLLTVPFLE), and 131–151 (TVFLIGTVVALWLGIGATLPI).

The protein belongs to the cytochrome b family. PetD subfamily. As to quaternary structure, the 4 large subunits of the cytochrome b6-f complex are cytochrome b6, subunit IV (17 kDa polypeptide, petD), cytochrome f and the Rieske protein, while the 4 small subunits are petG, petL, petM and petN. The complex functions as a dimer.

It localises to the plastid. The protein localises to the chloroplast thylakoid membrane. In terms of biological role, component of the cytochrome b6-f complex, which mediates electron transfer between photosystem II (PSII) and photosystem I (PSI), cyclic electron flow around PSI, and state transitions. In Oenothera elata subsp. hookeri (Hooker's evening primrose), this protein is Cytochrome b6-f complex subunit 4.